The primary structure comprises 629 residues: tRNA uridine 5-carboxymethylaminomethyl modification enzyme MnmG (629 aa).

Residues 14–19 (GAGHAG), Val-126, and Ser-181 each bind FAD. Residue 273–287 (GPRYCPSIEDKVVRF) coordinates NAD(+). FAD is bound at residue Gln-370.

The protein belongs to the MnmG family. As to quaternary structure, homodimer. Heterotetramer of two MnmE and two MnmG subunits. FAD is required as a cofactor.

The protein resides in the cytoplasm. In terms of biological role, NAD-binding protein involved in the addition of a carboxymethylaminomethyl (cmnm) group at the wobble position (U34) of certain tRNAs, forming tRNA-cmnm(5)s(2)U34. The protein is tRNA uridine 5-carboxymethylaminomethyl modification enzyme MnmG of Bacillus thuringiensis (strain Al Hakam).